The chain runs to 664 residues: ATP-dependent RNA helicase MSS116, mitochondrial (664 aa).

A mitochondrion-targeting transit peptide spans 1-26 (MLTSILIKGRTPVLASRNLLAALSNC). The segment at 42-79 (NRDQRNFGRNQRNNNSNRYRNSRFNSRPRTRSREDDDE) is disordered. Low complexity predominate over residues 48 to 68 (FGRNQRNNNSNRYRNSRFNSR). Residues 106–134 (SLLEEGVLDKEIHKAITRMEFPGLTPVQQ) carry the Q motif motif. The Helicase ATP-binding domain occupies 139 to 326 (PILSSEDHDV…NNIMNKKECL (188 aa)). 152–159 (AKTGTGKT) contributes to the ATP binding site. The DEAD box motif lies at 267–270 (DEAD). In terms of domain architecture, Helicase C-terminal spans 355–512 (SIFAAVEHIK…EKYEPSEEIK (158 aa)). The disordered stretch occupies residues 602 to 664 (GNNKSYDYDD…NYSSRNSNIY (63 aa)). Positions 628-638 (QNRDYDDEPFR) are enriched in basic and acidic residues. The span at 639–649 (RSNNNRRSFSR) shows a compositional bias: low complexity. Residues 653-664 (KNNYSSRNSNIY) are compositionally biased toward polar residues.

The protein belongs to the DEAD box helicase family. DDX18/HAS1 subfamily.

It is found in the mitochondrion matrix. It catalyses the reaction ATP + H2O = ADP + phosphate + H(+). Its function is as follows. ATP-dependent RNA helicase required for mitochondrial splicing of group I and II introns. Specifically involved in the ATP-dependent splicing of the bl1 intron of COB. Also required for efficient mitochondrial translation. The sequence is that of ATP-dependent RNA helicase MSS116, mitochondrial (MSS116) from Saccharomyces cerevisiae (strain ATCC 204508 / S288c) (Baker's yeast).